The primary structure comprises 118 residues: MARIAGINIPDHKHTVIALTAIYGIGKTRAQAICAATGIAEDVKISELSEEQIDKLRDEVGKFTVEGDLRREVTLNIKRLLDLGCYRGLRHRRGLPVRGQRTKTNARTRKGPRKPIKK.

Residues 94-118 (GLPVRGQRTKTNARTRKGPRKPIKK) are disordered.

Belongs to the universal ribosomal protein uS13 family. Part of the 30S ribosomal subunit. Forms a loose heterodimer with protein S19. Forms two bridges to the 50S subunit in the 70S ribosome.

In terms of biological role, located at the top of the head of the 30S subunit, it contacts several helices of the 16S rRNA. In the 70S ribosome it contacts the 23S rRNA (bridge B1a) and protein L5 of the 50S subunit (bridge B1b), connecting the 2 subunits; these bridges are implicated in subunit movement. Contacts the tRNAs in the A and P-sites. The sequence is that of Small ribosomal subunit protein uS13 from Pasteurella multocida (strain Pm70).